The following is a 176-amino-acid chain: ATP-dependent protease subunit HslV (176 aa).

The active site involves Thr2. Gly157, Cys160, and Thr163 together coordinate Na(+).

It belongs to the peptidase T1B family. HslV subfamily. A double ring-shaped homohexamer of HslV is capped on each side by a ring-shaped HslU homohexamer. The assembly of the HslU/HslV complex is dependent on binding of ATP.

It is found in the cytoplasm. The enzyme catalyses ATP-dependent cleavage of peptide bonds with broad specificity.. With respect to regulation, allosterically activated by HslU binding. Its function is as follows. Protease subunit of a proteasome-like degradation complex believed to be a general protein degrading machinery. The protein is ATP-dependent protease subunit HslV of Klebsiella pneumoniae (strain 342).